The following is a 289-amino-acid chain: Bis(5'-nucleosyl)-tetraphosphatase, symmetrical (289 aa).

It belongs to the Ap4A hydrolase family.

It carries out the reaction P(1),P(4)-bis(5'-adenosyl) tetraphosphate + H2O = 2 ADP + 2 H(+). Its function is as follows. Hydrolyzes diadenosine 5',5'''-P1,P4-tetraphosphate to yield ADP. This is Bis(5'-nucleosyl)-tetraphosphatase, symmetrical from Yersinia pseudotuberculosis serotype O:3 (strain YPIII).